We begin with the raw amino-acid sequence, 175 residues long: ATP synthase subunit b (175 aa).

Residues 19 to 35 form a helical membrane-spanning segment; the sequence is GLIFWTTVTFLIVLFIL.

This sequence belongs to the ATPase B chain family. As to quaternary structure, F-type ATPases have 2 components, F(1) - the catalytic core - and F(0) - the membrane proton channel. F(1) has five subunits: alpha(3), beta(3), gamma(1), delta(1), epsilon(1). F(0) has four main subunits: a(1), b(2) and c(10-14). The alpha and beta chains form an alternating ring which encloses part of the gamma chain. F(1) is attached to F(0) by a central stalk formed by the gamma and epsilon chains, while a peripheral stalk is formed by the delta and b chains.

The protein resides in the cell inner membrane. Its function is as follows. F(1)F(0) ATP synthase produces ATP from ADP in the presence of a proton or sodium gradient. F-type ATPases consist of two structural domains, F(1) containing the extramembraneous catalytic core and F(0) containing the membrane proton channel, linked together by a central stalk and a peripheral stalk. During catalysis, ATP synthesis in the catalytic domain of F(1) is coupled via a rotary mechanism of the central stalk subunits to proton translocation. Functionally, component of the F(0) channel, it forms part of the peripheral stalk, linking F(1) to F(0). The protein is ATP synthase subunit b of Chlorobium phaeobacteroides (strain BS1).